Consider the following 97-residue polypeptide: Small ribosomal subunit protein bS21 (97 aa).

A disordered region spans residues 37–97 (EKPSVRKARE…APASSPTTTA (61 aa)). Residues 76 to 97 (RAVAPRRPAAAPAPASSPTTTA) are compositionally biased toward low complexity.

Belongs to the bacterial ribosomal protein bS21 family.

The chain is Small ribosomal subunit protein bS21 from Methylobacterium sp. (strain 4-46).